A 652-amino-acid chain; its full sequence is Acetyl-coenzyme A synthetase (652 aa).

CoA contacts are provided by residues 189–192 and T311; that span reads RGDK. ATP is bound by residues 387-389, 411-416, D500, and R515; these read GEP and DTWWQT. S523 contacts CoA. Position 526 (R526) interacts with ATP. Mg(2+) contacts are provided by H539 and V542. R584 is a binding site for CoA. Residue K609 is modified to N6-acetyllysine.

Belongs to the ATP-dependent AMP-binding enzyme family. It depends on Mg(2+) as a cofactor. Acetylated. Deacetylation by the SIR2-homolog deacetylase activates the enzyme.

It carries out the reaction acetate + ATP + CoA = acetyl-CoA + AMP + diphosphate. Catalyzes the conversion of acetate into acetyl-CoA (AcCoA), an essential intermediate at the junction of anabolic and catabolic pathways. AcsA undergoes a two-step reaction. In the first half reaction, AcsA combines acetate with ATP to form acetyl-adenylate (AcAMP) intermediate. In the second half reaction, it can then transfer the acetyl group from AcAMP to the sulfhydryl group of CoA, forming the product AcCoA. The polypeptide is Acetyl-coenzyme A synthetase (Bartonella bacilliformis (strain ATCC 35685 / KC583 / Herrer 020/F12,63)).